The primary structure comprises 174 residues: Protein PopB (174 aa).

Residues 1–174 form a disordered region; the sequence is MSHSKIKAGG…EAMKIKDDDD (174 aa). Residues 50-65 are compositionally biased toward polar residues; the sequence is LNKSNLGSDSQTWTPG. Residues 66–78 show a composition bias toward low complexity; it reads STMVSLKSRSSSS. Residues 79–89 are compositionally biased toward basic and acidic residues; the sequence is HKPDTGGDTKP. Residues 147–161 are compositionally biased toward low complexity; sequence IALQRAIQRQTQTRQ. Residues 162 to 174 show a composition bias toward basic and acidic residues; sequence KMQEAMKIKDDDD.

Its subcellular location is the secreted. Probably involved in host-pathogen interactions. The polypeptide is Protein PopB (popB) (Ralstonia nicotianae (strain ATCC BAA-1114 / GMI1000) (Ralstonia solanacearum)).